Here is a 76-residue protein sequence, read N- to C-terminus: Large ribosomal subunit protein uL29 (76 aa).

Belongs to the universal ribosomal protein uL29 family.

The protein is Large ribosomal subunit protein uL29 of Corynebacterium diphtheriae (strain ATCC 700971 / NCTC 13129 / Biotype gravis).